Consider the following 528-residue polypeptide: Phosphoenolpyruvate carboxykinase (ATP) (528 aa).

Positions 56, 192, and 198 each coordinate substrate. Residues Lys198, His217, and Gly233–Thr241 each bind ATP. Mn(2+) is bound by residues Lys198 and His217. Asp254 is a Mn(2+) binding site. Residues Glu282, Arg319, and Thr444 each coordinate ATP. A substrate-binding site is contributed by Arg319.

This sequence belongs to the phosphoenolpyruvate carboxykinase (ATP) family. Requires Mn(2+) as cofactor.

It is found in the cytoplasm. The enzyme catalyses oxaloacetate + ATP = phosphoenolpyruvate + ADP + CO2. Its pathway is carbohydrate biosynthesis; gluconeogenesis. Involved in the gluconeogenesis. Catalyzes the conversion of oxaloacetate (OAA) to phosphoenolpyruvate (PEP) through direct phosphoryl transfer between the nucleoside triphosphate and OAA. The polypeptide is Phosphoenolpyruvate carboxykinase (ATP) (Bacillus cereus (strain B4264)).